A 689-amino-acid chain; its full sequence is Glycine--tRNA ligase beta subunit (689 aa).

Belongs to the class-II aminoacyl-tRNA synthetase family. As to quaternary structure, tetramer of two alpha and two beta subunits.

Its subcellular location is the cytoplasm. The catalysed reaction is tRNA(Gly) + glycine + ATP = glycyl-tRNA(Gly) + AMP + diphosphate. In Shewanella piezotolerans (strain WP3 / JCM 13877), this protein is Glycine--tRNA ligase beta subunit.